Consider the following 233-residue polypeptide: Phosphatidylserine decarboxylase proenzyme (233 aa).

S190 functions as the Schiff-base intermediate with substrate; via pyruvic acid in the catalytic mechanism. A Pyruvic acid (Ser); by autocatalysis modification is found at S190.

Belongs to the phosphatidylserine decarboxylase family. PSD-A subfamily. Heterodimer of a large membrane-associated beta subunit and a small pyruvoyl-containing alpha subunit. Requires pyruvate as cofactor. Post-translationally, is synthesized initially as an inactive proenzyme. Formation of the active enzyme involves a self-maturation process in which the active site pyruvoyl group is generated from an internal serine residue via an autocatalytic post-translational modification. Two non-identical subunits are generated from the proenzyme in this reaction, and the pyruvate is formed at the N-terminus of the alpha chain, which is derived from the carboxyl end of the proenzyme. The post-translation cleavage follows an unusual pathway, termed non-hydrolytic serinolysis, in which the side chain hydroxyl group of the serine supplies its oxygen atom to form the C-terminus of the beta chain, while the remainder of the serine residue undergoes an oxidative deamination to produce ammonia and the pyruvoyl prosthetic group on the alpha chain.

It is found in the cell membrane. The enzyme catalyses a 1,2-diacyl-sn-glycero-3-phospho-L-serine + H(+) = a 1,2-diacyl-sn-glycero-3-phosphoethanolamine + CO2. The protein operates within phospholipid metabolism; phosphatidylethanolamine biosynthesis; phosphatidylethanolamine from CDP-diacylglycerol: step 2/2. Functionally, catalyzes the formation of phosphatidylethanolamine (PtdEtn) from phosphatidylserine (PtdSer). In Xanthobacter autotrophicus (strain ATCC BAA-1158 / Py2), this protein is Phosphatidylserine decarboxylase proenzyme.